Here is a 257-residue protein sequence, read N- to C-terminus: NH(3)-dependent NAD(+) synthetase (257 aa).

An ATP-binding site is contributed by 40–47; that stretch reads GISGGIDS. Asp-46 is a binding site for Mg(2+). Arg-121 is a deamido-NAD(+) binding site. Thr-141 contacts ATP. Mg(2+) is bound at residue Glu-146. Deamido-NAD(+) is bound by residues Lys-154 and Asp-161. ATP-binding residues include Lys-170 and Ser-192. 238–239 serves as a coordination point for deamido-NAD(+); that stretch reads HK.

The protein belongs to the NAD synthetase family. In terms of assembly, homodimer.

It carries out the reaction deamido-NAD(+) + NH4(+) + ATP = AMP + diphosphate + NAD(+) + H(+). It functions in the pathway cofactor biosynthesis; NAD(+) biosynthesis; NAD(+) from deamido-NAD(+) (ammonia route): step 1/1. Its function is as follows. Catalyzes the ATP-dependent amidation of deamido-NAD to form NAD. Uses ammonia as a nitrogen source. The sequence is that of NH(3)-dependent NAD(+) synthetase from Mycoplasmopsis pulmonis (strain UAB CTIP) (Mycoplasma pulmonis).